The sequence spans 988 residues: Band 4.1-like protein 2 (988 aa).

Residues Met1–Val190 are disordered. Thr2 carries the N-acetylthreonine modification. At Ser7 the chain carries Phosphoserine. The segment covering Ala22–Glu31 has biased composition (basic and acidic residues). A phosphoserine mark is found at Ser38, Ser86, and Ser116. 2 stretches are compositionally biased toward basic and acidic residues: residues Ile110–Pro148 and Glu160–Val190. Ser201, Ser379, Ser395, Ser492, Ser543, Ser555, Ser561, and Ser582 each carry phosphoserine. An FERM domain is found at Val211–Ser492. Residues Gln495 to Glu651 are hydrophilic. Residues Thr514–Lys594 are disordered. A compositionally biased stretch (low complexity) spans Ser555–Val567. Tyr606 is subject to Phosphotyrosine. Residues Ser610 and Ser630 each carry the phosphoserine modification. 2 disordered regions span residues Met639 to Ala788 and Gln804 to Leu839. Positions Lys652–Pro837 are spectrin--actin-binding. The segment covering Val673–Ser686 has biased composition (basic and acidic residues). Ser698 is subject to Phosphoserine. Over residues Gly704–Ser717 the composition is skewed to basic and acidic residues. Low complexity predominate over residues Thr718–Ser729. Positions Gln739–Glu751 are enriched in basic and acidic residues. The residue at position 745 (Thr745) is a Phosphothreonine. Positions Glu752–Pro764 are enriched in acidic residues. Residues Asp828 to Leu839 are compositionally biased toward basic and acidic residues. The tract at residues His838–Glu988 is C-terminal (CTD).

Interacts with FCGR1A. Interacts with TRPC4. Interacts (via CTD domain) with FKBP2. Interacts with NUMA1; this interaction is negatively regulated by CDK1 during metaphase and promotes anaphase-specific localization of NUMA1 in symmetrically dividing cells. In terms of tissue distribution, widely expressed.

It is found in the cytoplasm. The protein localises to the cytoskeleton. It localises to the cell cortex. Its subcellular location is the cell membrane. In terms of biological role, required for dynein-dynactin complex and NUMA1 recruitment at the mitotic cell cortex during anaphase. This Mus musculus (Mouse) protein is Band 4.1-like protein 2.